A 910-amino-acid chain; its full sequence is DNA mismatch repair protein MutS (910 aa).

Residues 1 to 11 are compositionally biased toward basic and acidic residues; sequence MEAKVEEKEPE. A disordered region spans residues 1–21; it reads MEAKVEEKEPEPVENAGPDAP. 658–665 serves as a coordination point for ATP; sequence GPNMGGKS.

The protein belongs to the DNA mismatch repair MutS family.

In terms of biological role, this protein is involved in the repair of mismatches in DNA. It is possible that it carries out the mismatch recognition step. This protein has a weak ATPase activity. The protein is DNA mismatch repair protein MutS of Brucella canis (strain ATCC 23365 / NCTC 10854 / RM-666).